The chain runs to 472 residues: Zinc finger CCCH domain-containing protein 59 (472 aa).

The disordered stretch occupies residues 87–139; sequence YKSPEGNRPRQNAANGSAKPQVIGTGHRVSNQPRKNAVYGPRSSSLSDTRGCG. The segment at 145–172 adopts a C3H1-type zinc-finger fold; the sequence is SPKKSVCNFWKDGNCKKGEKCQFLHSWS. 5 WD repeats span residues 185-226, 261-301, 310-347, 350-387, and 436-472; these read GHKN…RSIN, HLEG…SDPF, HHSGEVTCFVVGGEVLYSGSVDKTIKVWDLNTLQCRMT, QHIGTVTSLLCWDKCLISSSLDGTIKLWACSENESLKV, and FSTQTICTLTIGPGGLLFSGDKSGNLRVWSLASGTKV.

This Arabidopsis thaliana (Mouse-ear cress) protein is Zinc finger CCCH domain-containing protein 59 (ZFWD3).